The primary structure comprises 339 residues: DNA-directed RNA polymerase subunit alpha (339 aa).

Residues 1–238 (MVDPIVTKNW…EQLSIFINFD (238 aa)) form an alpha N-terminal domain (alpha-NTD) region. The tract at residues 250 to 339 (VEEQKLNENL…KAAPQGAPKV (90 aa)) is alpha C-terminal domain (alpha-CTD).

Belongs to the RNA polymerase alpha chain family. In terms of assembly, homodimer. The RNAP catalytic core consists of 2 alpha, 1 beta, 1 beta' and 1 omega subunit. When a sigma factor is associated with the core the holoenzyme is formed, which can initiate transcription.

It catalyses the reaction RNA(n) + a ribonucleoside 5'-triphosphate = RNA(n+1) + diphosphate. Its function is as follows. DNA-dependent RNA polymerase catalyzes the transcription of DNA into RNA using the four ribonucleoside triphosphates as substrates. The polypeptide is DNA-directed RNA polymerase subunit alpha (Anaeromyxobacter dehalogenans (strain 2CP-C)).